The primary structure comprises 140 residues: MIYGIGTDIIQIARVQGVMTRTNGRFAEKVLGPDELAKYHARKARSEKRGLAFLATRFAAKEAFSKAIGLGMRWPMTWRAMELMNLPSGEPTAVCHGELAAWLAERGLVVRVSVSDEHDYAVAFAIAERSGAAVSQPTAL.

Residues D8 and E62 each coordinate Mg(2+).

Belongs to the P-Pant transferase superfamily. AcpS family. Requires Mg(2+) as cofactor.

It localises to the cytoplasm. The catalysed reaction is apo-[ACP] + CoA = holo-[ACP] + adenosine 3',5'-bisphosphate + H(+). Functionally, transfers the 4'-phosphopantetheine moiety from coenzyme A to a Ser of acyl-carrier-protein. The sequence is that of Holo-[acyl-carrier-protein] synthase from Cupriavidus taiwanensis (strain DSM 17343 / BCRC 17206 / CCUG 44338 / CIP 107171 / LMG 19424 / R1) (Ralstonia taiwanensis (strain LMG 19424)).